The primary structure comprises 573 residues: Probable zinc metallopeptidase EGY3, chloroplastic (573 aa).

Residues 1–50 constitute a chloroplast transit peptide; it reads MASLFVSTPSSSLTLKSCHSLHLRRFDRAEFSNFGKASVNQTTRSRHSLR. Positions 38 to 105 are disordered; it reads SVNQTTRSRH…EKKSKQQEMD (68 aa). Basic and acidic residues-rich tracts occupy residues 52-62 and 96-105; these read SAEDDRVREPV and EKKSKQQEMD. Residues 122–185 adopt a coiled-coil conformation; sequence EAAIKLEKTR…KALDLNKLKS (64 aa). A run of 7 helical transmembrane segments spans residues 274–294, 305–325, 376–396, 414–434, 441–461, 493–513, and 536–556; these read VSAI…SGFF, IANV…SEIA, ASAY…DGSF, PLLS…GNVL, VGVP…VTSL, LLLG…GLFA, and FAWG…NSGG.

This sequence belongs to the peptidase M50B family.

The protein resides in the plastid. The protein localises to the chloroplast membrane. Its function is as follows. Probable membrane-associated metalloprotease that may be involved in chloroplast development. This is Probable zinc metallopeptidase EGY3, chloroplastic (EGY3) from Arabidopsis thaliana (Mouse-ear cress).